Here is a 561-residue protein sequence, read N- to C-terminus: Arginine--tRNA ligase (561 aa).

The short motif at 136 to 146 (ANPTGLLHMGN) is the 'HIGH' region element.

Belongs to the class-I aminoacyl-tRNA synthetase family. As to quaternary structure, monomer.

It is found in the cytoplasm. The enzyme catalyses tRNA(Arg) + L-arginine + ATP = L-arginyl-tRNA(Arg) + AMP + diphosphate. The protein is Arginine--tRNA ligase of Desulforamulus reducens (strain ATCC BAA-1160 / DSM 100696 / MI-1) (Desulfotomaculum reducens).